The chain runs to 129 residues: MSFEYPQDFRYLDSHEYVRIDGEIATIGITEFAVHELGDIVFLELPEIGDALTRGENFGTIESVKAVEELNSPVTGTVIERNEALINSPEEVSEDPYGEGWFLKVRVNDPGEIEDALTADEYRAQVEGE.

Positions 24–106 constitute a Lipoyl-binding domain; it reads IATIGITEFA…YGEGWFLKVR (83 aa). K65 carries the post-translational modification N6-lipoyllysine.

The protein belongs to the GcvH family. As to quaternary structure, the glycine cleavage system is composed of four proteins: P, T, L and H. It depends on (R)-lipoate as a cofactor.

Functionally, the glycine cleavage system catalyzes the degradation of glycine. The H protein shuttles the methylamine group of glycine from the P protein to the T protein. This chain is Glycine cleavage system H protein, found in Nostoc punctiforme (strain ATCC 29133 / PCC 73102).